A 531-amino-acid chain; its full sequence is Nuclear RNA export factor 3 (531 aa).

Disordered regions lie at residues 33–59 (RSEP…HGAH) and 83–106 (QDQT…GNMP). Positions 41 to 50 (MHSSSHQQQD) are enriched in polar residues. Residues 83 to 102 (QDQTHVNMEREQKPPERRME) show a composition bias toward basic and acidic residues. The 80-residue stretch at 113–192 (WFKITVPFGI…IFVNPAGIPH (80 aa)) folds into the RRM domain. The NTF2 domain maps to 344–494 (LVLQFLQQYY…LCIVNDKLFV (151 aa)).

This sequence belongs to the NXF family. Interacts with NXT1, NXT2, E1B-AP5 and CRM1 nuclear export factor. Expressed at high level in testis and at low level in a small number of tissues.

It is found in the nucleus. It localises to the cytoplasm. May function as a tissue-specific nuclear mRNA export factor. This chain is Nuclear RNA export factor 3 (NXF3), found in Homo sapiens (Human).